The following is a 330-amino-acid chain: Aspartate--ammonia ligase (330 aa).

The protein belongs to the class-II aminoacyl-tRNA synthetase family. AsnA subfamily.

It localises to the cytoplasm. The enzyme catalyses L-aspartate + NH4(+) + ATP = L-asparagine + AMP + diphosphate + H(+). It functions in the pathway amino-acid biosynthesis; L-asparagine biosynthesis; L-asparagine from L-aspartate (ammonia route): step 1/1. The protein is Aspartate--ammonia ligase of Streptococcus pyogenes serotype M2 (strain MGAS10270).